The following is a 154-amino-acid chain: Myoglobin (154 aa).

Residues valine 2–lysine 148 enclose the Globin domain. Position 4 is a phosphoserine (serine 4). Histidine 65 contributes to the nitrite binding site. Histidine 65 provides a ligand contact to O2. Threonine 68 carries the post-translational modification Phosphothreonine. Histidine 94 provides a ligand contact to heme b.

Belongs to the globin family. As to quaternary structure, monomeric.

Its subcellular location is the cytoplasm. The protein resides in the sarcoplasm. It carries out the reaction Fe(III)-heme b-[protein] + nitric oxide + H2O = Fe(II)-heme b-[protein] + nitrite + 2 H(+). The catalysed reaction is H2O2 + AH2 = A + 2 H2O. Functionally, monomeric heme protein which primary function is to store oxygen and facilitate its diffusion within muscle tissues. Reversibly binds oxygen through a pentacoordinated heme iron and enables its timely and efficient release as needed during periods of heightened demand. Depending on the oxidative conditions of tissues and cells, and in addition to its ability to bind oxygen, it also has a nitrite reductase activity whereby it regulates the production of bioactive nitric oxide. Under stress conditions, like hypoxia and anoxia, it also protects cells against reactive oxygen species thanks to its pseudoperoxidase activity. In Physeter macrocephalus (Sperm whale), this protein is Myoglobin (MB).